The following is a 239-amino-acid chain: Ribosomal RNA small subunit methyltransferase G (239 aa).

Residues G77, F82, 128-129 (AE), and R147 each bind S-adenosyl-L-methionine. Residues 219-239 (KNTPKKYPRKPGTPNKSPIEG) form a disordered region.

The protein belongs to the methyltransferase superfamily. RNA methyltransferase RsmG family.

Its subcellular location is the cytoplasm. Functionally, specifically methylates the N7 position of guanine in position 535 of 16S rRNA. This Bacillus subtilis (strain 168) protein is Ribosomal RNA small subunit methyltransferase G.